We begin with the raw amino-acid sequence, 353 residues long: 2-Hydroxyacid oxidase 2 (353 aa).

Positions 2 to 353 constitute an FMN hydroxy acid dehydrogenase domain; sequence PLVCLADFKA…SPDLIQFSRL (352 aa). FMN is bound by residues 77 to 79, Ser-106, and Gln-128; that span reads PTA. An a 2-oxocarboxylate-binding site is contributed by Tyr-130. Position 133 is a phosphoserine (Ser-133). Position 156 (Thr-156) interacts with FMN. Arg-165 serves as a coordination point for a 2-oxocarboxylate. Lys-224 contributes to the FMN binding site. His-248 functions as the Proton acceptor in the catalytic mechanism. Residue Arg-251 coordinates a 2-oxocarboxylate. FMN-binding positions include 279–283 and 302–303; these read DGGVR and GR. The short motif at 351–353 is the Microbody targeting signal element; the sequence is SRL.

It belongs to the FMN-dependent alpha-hydroxy acid dehydrogenase family. In terms of assembly, homotetramer. Could also form homooctamer. FMN is required as a cofactor. In terms of tissue distribution, expressed in kidney.

The protein resides in the peroxisome. The catalysed reaction is a (2S)-2-hydroxycarboxylate + O2 = a 2-oxocarboxylate + H2O2. It catalyses the reaction 2-hydroxyoctanoate + O2 = 2-oxooctanoate + H2O2. The enzyme catalyses 2-hydroxyhexadecanoate + O2 = 2-oxohexadecanoate + H2O2. It carries out the reaction 2-hydroxyhexanoate + O2 = 2-oxohexanoate + H2O2. The catalysed reaction is mandelate + O2 = phenylglyoxylate + H2O2. With respect to regulation, is inhibited in vitro by CCPST (4-carboxy-5-(4-chlorophenyl)sulfanyl-1,2,3-thiadiazole). In terms of biological role, oxidase that catalyzes the oxidation of medium and long chain hydroxyacids such as 2-hydroxyhexadecanoate, 2-hydroxyoctanoate, 2-hydroxyhexanoate and 2-hydroxybutanoate, to the correspondong 2-oxoacids. Its role in the oxidation of 2-hydroxy fatty acids may contribute to the general pathway of fatty acid alpha-oxidation. Can also use mandelate as substrate. Active in vitro with the artificial electron acceptor 2,6-dichlorophenolindophenol (DCIP), but O2 is believed to be the physiological electron acceptor, leading to the production of H2O2. This is 2-Hydroxyacid oxidase 2 (Hao2) from Rattus norvegicus (Rat).